Here is a 374-residue protein sequence, read N- to C-terminus: AA14 family lytic polysaccharide monooxygenase B (374 aa).

The first 18 residues, 1–18 (MIPVFLAAIAVFLPLTSG), serve as a signal peptide directing secretion. N-linked (GlcNAc...) asparagine glycosylation is found at Asn31, Asn49, Asn94, and Asn151. Disulfide bonds link Cys85-Cys108, Cys127-Cys154, Cys171-Cys176, Cys178-Cys200, and Cys220-Cys236. 2 N-linked (GlcNAc...) asparagine glycosylation sites follow: Asn235 and Asn315. The segment at 306 to 374 (ISNATPAPSN…TQSRKMRYVF (69 aa)) is disordered. The segment covering 313 to 344 (PSNGSCSSRPPSSPVSSSAASTTTSRSPRPSA) has biased composition (low complexity).

The protein belongs to the polysaccharide monooxygenase AA14 family. Cu(2+) serves as cofactor.

Its subcellular location is the secreted. Lytic polysaccharide monooxygenase (LPMO) that oxidatively cleaves xylan with both C1 and C4 regioselectivity and that specifically targets the protective shield made by heteroxylans that cover cellulose microfibrils in wood. Catalysis by LPMOs requires the reduction of the active-site copper from Cu(II) to Cu(I) by a reducing agent and H(2)O(2) or O(2) as a cosubstrate. Cleavage occurs only when xylans are bound to cellulose and not when they are in solution. Increases the efficiency of wood saccharification through oxidative cleavage of highly refractory xylan-coated cellulose fibers via synergistic relationship with xylan-active enzymes, xylobiohydrolases and cellobiohydrolases. This is AA14 family lytic polysaccharide monooxygenase B from Pycnoporus cinnabarinus (Cinnabar-red polypore).